The following is a 99-amino-acid chain: Transposase InsE for insertion sequence IS3A (99 aa).

The interval 1–21 (MTKTVSTSKKPRKQHSPEFRS) is disordered.

Belongs to the transposase 8 family.

Functionally, involved in the transposition of the insertion sequence IS3. In Escherichia coli (strain K12), this protein is Transposase InsE for insertion sequence IS3A (insE1).